The chain runs to 320 residues: Short-chain dehydrogenase/reductase ATR7 (320 aa).

Residues S32, I34, Q55, D70, N93, K134, Y167, K171, and T202 each coordinate NADP(+). Y167 functions as the Proton acceptor in the catalytic mechanism. Residue K171 is the Lowers pKa of active site Tyr of the active site.

The protein belongs to the short-chain dehydrogenases/reductases (SDR) family.

It functions in the pathway mycotoxin biosynthesis. In terms of biological role, short-chain dehydrogenase/reductase; part of the core atranone cluster (CAC) which products are predicted to catalyze most or all steps of mycotoxin atranone synthesis, starting from geranylgeranyl pyrophosphate (GGPP). The initial cyclization of GGPP to dolabellane is probably performed by the terpene cyclase ATR13. The Baeyer-Villiger oxidation near the end of the atranone synthesis, which converts atranones D and E to atranones F and G is predicted to be catalyzed by the monooxygenase ATR8. Of the CAC's other predicted gene products, the reducing PKS ATR6 might synthesize a polyketide chain. This polyketide is probably transferred onto the atranone backbone by the polyketide transferase ATR5. Other predicted CAC products include 4 oxygenases (ATR2, ATR3, ATR4, and ATR14), 3 short-chain reductases (ATR7, ATR9, and ATR10), and a methyltransferase (ATR12). These may all be involved in the various steps of atranone biosynthesis, although their specific roles must await experimental determination. This Stachybotrys chlorohalonatus (strain IBT 40285) protein is Short-chain dehydrogenase/reductase ATR7.